The following is a 236-amino-acid chain: Phosphoribosylaminoimidazole-succinocarboxamide synthase (236 aa).

Belongs to the SAICAR synthetase family.

It catalyses the reaction 5-amino-1-(5-phospho-D-ribosyl)imidazole-4-carboxylate + L-aspartate + ATP = (2S)-2-[5-amino-1-(5-phospho-beta-D-ribosyl)imidazole-4-carboxamido]succinate + ADP + phosphate + 2 H(+). Its pathway is purine metabolism; IMP biosynthesis via de novo pathway; 5-amino-1-(5-phospho-D-ribosyl)imidazole-4-carboxamide from 5-amino-1-(5-phospho-D-ribosyl)imidazole-4-carboxylate: step 1/2. The polypeptide is Phosphoribosylaminoimidazole-succinocarboxamide synthase (purC) (Lactococcus lactis subsp. cremoris (Streptococcus cremoris)).